Here is a 331-residue protein sequence, read N- to C-terminus: MAKMYYDKDADLNLLKNKKIAIIGFGSQGHAHALNLRDSGLDVIVGLYEGSKSKERAEKEGLRVYTVEEAAKVADIIMMLIPDEKQAKVYKESIEKNLTEGKALAFAHGFNIHFKQIVPPKNVDVFMVAPKGPGHLVRRVYQEGKGVPNLVAVYQDYTGKAFEIALAYAKGIGGTRAGVIETTFKEETETDLFGEQAVLCGGVTELMKAGFETLVEAGYQPEIAYFECVHEMKLIVDLIYEGGFSYMRYSISDTAEFGDYMTGKRIITEETRKEMKKVLSEIQSGKFAKEWLLENQVGRPQYNAIKDKEANHLIEKVGKGLREMMAWIKKE.

The 181-residue stretch at 2–182 folds into the KARI N-terminal Rossmann domain; it reads AKMYYDKDAD…GGTRAGVIET (181 aa). Residues 25–28, S51, S53, and 83–86 contribute to the NADP(+) site; these read FGSQ and DEKQ. The active site involves H108. G134 provides a ligand contact to NADP(+). Positions 183–328 constitute a KARI C-terminal knotted domain; that stretch reads TFKEETETDL…KGLREMMAWI (146 aa). Mg(2+) contacts are provided by D191, E195, E227, and E231. S252 lines the substrate pocket.

It belongs to the ketol-acid reductoisomerase family. Mg(2+) is required as a cofactor.

It carries out the reaction (2R)-2,3-dihydroxy-3-methylbutanoate + NADP(+) = (2S)-2-acetolactate + NADPH + H(+). It catalyses the reaction (2R,3R)-2,3-dihydroxy-3-methylpentanoate + NADP(+) = (S)-2-ethyl-2-hydroxy-3-oxobutanoate + NADPH + H(+). It participates in amino-acid biosynthesis; L-isoleucine biosynthesis; L-isoleucine from 2-oxobutanoate: step 2/4. The protein operates within amino-acid biosynthesis; L-valine biosynthesis; L-valine from pyruvate: step 2/4. Involved in the biosynthesis of branched-chain amino acids (BCAA). Catalyzes an alkyl-migration followed by a ketol-acid reduction of (S)-2-acetolactate (S2AL) to yield (R)-2,3-dihydroxy-isovalerate. In the isomerase reaction, S2AL is rearranged via a Mg-dependent methyl migration to produce 3-hydroxy-3-methyl-2-ketobutyrate (HMKB). In the reductase reaction, this 2-ketoacid undergoes a metal-dependent reduction by NADPH to yield (R)-2,3-dihydroxy-isovalerate. The protein is Ketol-acid reductoisomerase (NADP(+)) of Thermoanaerobacter sp. (strain X514).